A 511-amino-acid polypeptide reads, in one-letter code: Histidine ammonia-lyase (511 aa).

The 5-imidazolinone (Ala-Gly) cross-link spans 143 to 145 (ASG). S144 carries the post-translational modification 2,3-didehydroalanine (Ser).

Belongs to the PAL/histidase family. In terms of processing, contains an active site 4-methylidene-imidazol-5-one (MIO), which is formed autocatalytically by cyclization and dehydration of residues Ala-Ser-Gly.

The protein localises to the cytoplasm. The catalysed reaction is L-histidine = trans-urocanate + NH4(+). The protein operates within amino-acid degradation; L-histidine degradation into L-glutamate; N-formimidoyl-L-glutamate from L-histidine: step 1/3. The protein is Histidine ammonia-lyase of Vibrio cholerae serotype O1 (strain ATCC 39315 / El Tor Inaba N16961).